The chain runs to 152 residues: Deoxyuridine 5'-triphosphate nucleotidohydrolase (152 aa).

Residues 71 to 73 (RSG), Asn84, 88 to 90 (LID), and Lys98 contribute to the substrate site.

This sequence belongs to the dUTPase family. Requires Mg(2+) as cofactor.

The catalysed reaction is dUTP + H2O = dUMP + diphosphate + H(+). It functions in the pathway pyrimidine metabolism; dUMP biosynthesis; dUMP from dCTP (dUTP route): step 2/2. Its function is as follows. This enzyme is involved in nucleotide metabolism: it produces dUMP, the immediate precursor of thymidine nucleotides and it decreases the intracellular concentration of dUTP so that uracil cannot be incorporated into DNA. The sequence is that of Deoxyuridine 5'-triphosphate nucleotidohydrolase from Legionella pneumophila subsp. pneumophila (strain Philadelphia 1 / ATCC 33152 / DSM 7513).